Consider the following 592-residue polypeptide: Methylenetetrahydrofolate reductase (NADH) 1 (592 aa).

The active-site Proton donor/acceptor is glutamate 21. NAD(+)-binding positions include 21–26 and 52–53; these read EFFPPK and TW. Residues 52–53, histidine 81, 111–113, tyrosine 153, 157–160, aspartate 175, and lysine 182 contribute to the FAD site; these read TW, RGD, and HPDV. Position 113 (aspartate 113) interacts with substrate. Glutamine 193 and tyrosine 285 together coordinate substrate.

It belongs to the methylenetetrahydrofolate reductase family. Homodimer. It depends on FAD as a cofactor.

The enzyme catalyses (6S)-5-methyl-5,6,7,8-tetrahydrofolate + NAD(+) = (6R)-5,10-methylene-5,6,7,8-tetrahydrofolate + NADH + H(+). The protein operates within one-carbon metabolism; tetrahydrofolate interconversion. With respect to regulation, plant MTHFRs strongly prefer NADH over NADPH. Not inhibited by methionine or S-adenosylmethionine. The probable reversibility of the MTHFR reaction in plants suggests that they can metabolize the methyl group of 5,10-methylenetetrahydrofolate to serine, sugars and starch. The sequence is that of Methylenetetrahydrofolate reductase (NADH) 1 (MTHFR1) from Arabidopsis thaliana (Mouse-ear cress).